A 272-amino-acid polypeptide reads, in one-letter code: Indole-3-glycerol phosphate synthase (272 aa).

This sequence belongs to the TrpC family.

The enzyme catalyses 1-(2-carboxyphenylamino)-1-deoxy-D-ribulose 5-phosphate + H(+) = (1S,2R)-1-C-(indol-3-yl)glycerol 3-phosphate + CO2 + H2O. It participates in amino-acid biosynthesis; L-tryptophan biosynthesis; L-tryptophan from chorismate: step 4/5. This chain is Indole-3-glycerol phosphate synthase, found in Mycobacterium sp. (strain JLS).